Here is a 232-residue protein sequence, read N- to C-terminus: Putative N-acetylmannosamine-6-phosphate 2-epimerase (232 aa).

Belongs to the NanE family.

It catalyses the reaction an N-acyl-D-glucosamine 6-phosphate = an N-acyl-D-mannosamine 6-phosphate. The protein operates within amino-sugar metabolism; N-acetylneuraminate degradation; D-fructose 6-phosphate from N-acetylneuraminate: step 3/5. Functionally, converts N-acetylmannosamine-6-phosphate (ManNAc-6-P) to N-acetylglucosamine-6-phosphate (GlcNAc-6-P). This is Putative N-acetylmannosamine-6-phosphate 2-epimerase from Corynebacterium glutamicum (strain R).